The chain runs to 183 residues: Ribulose bisphosphate carboxylase small subunit, chloroplastic 1 (183 aa).

The transit peptide at 1–58 directs the protein to the chloroplast; the sequence is MASSMLSNAAMATTAATAGAQASMVAPFNGLKSFATFPITKKSSNDFSSLPSNGGRVQ.

Belongs to the RuBisCO small chain family. As to quaternary structure, heterohexadecamer of 8 large and 8 small subunits.

The protein resides in the plastid. Its subcellular location is the chloroplast. In terms of biological role, ruBisCO catalyzes two reactions: the carboxylation of D-ribulose 1,5-bisphosphate, the primary event in carbon dioxide fixation, as well as the oxidative fragmentation of the pentose substrate. Both reactions occur simultaneously and in competition at the same active site. Although the small subunit is not catalytic it is essential for maximal activity. The polypeptide is Ribulose bisphosphate carboxylase small subunit, chloroplastic 1 (Amaranthus hypochondriacus (Prince-of-Wales feather)).